We begin with the raw amino-acid sequence, 428 residues long: Gamma-glutamyl phosphate reductase (428 aa).

The protein belongs to the gamma-glutamyl phosphate reductase family.

It is found in the cytoplasm. It carries out the reaction L-glutamate 5-semialdehyde + phosphate + NADP(+) = L-glutamyl 5-phosphate + NADPH + H(+). It participates in amino-acid biosynthesis; L-proline biosynthesis; L-glutamate 5-semialdehyde from L-glutamate: step 2/2. Its function is as follows. Catalyzes the NADPH-dependent reduction of L-glutamate 5-phosphate into L-glutamate 5-semialdehyde and phosphate. The product spontaneously undergoes cyclization to form 1-pyrroline-5-carboxylate. In Streptomyces coelicolor (strain ATCC BAA-471 / A3(2) / M145), this protein is Gamma-glutamyl phosphate reductase.